A 156-amino-acid chain; its full sequence is Small ribosomal subunit protein uS7 (156 aa).

Belongs to the universal ribosomal protein uS7 family. Part of the 30S ribosomal subunit. Contacts proteins S9 and S11.

In terms of biological role, one of the primary rRNA binding proteins, it binds directly to 16S rRNA where it nucleates assembly of the head domain of the 30S subunit. Is located at the subunit interface close to the decoding center, probably blocks exit of the E-site tRNA. The chain is Small ribosomal subunit protein uS7 from Clostridium kluyveri (strain NBRC 12016).